We begin with the raw amino-acid sequence, 20 residues long: Ranalexin-1Cb (20 aa).

Residues C14 and C20 are joined by a disulfide bond.

As to expression, expressed by the skin glands.

It is found in the secreted. Functionally, antibacterial activity against Gram-positive bacterium S.aureus and Gram-negative bacterium E.coli. Has activity against C.albicans. The protein is Ranalexin-1Cb of Lithobates clamitans (Green frog).